We begin with the raw amino-acid sequence, 209 residues long: Protein phosphotransferase ChpT (209 aa).

Phosphohistidine is present on H22.

The protein belongs to the ChpT phosphotransferase family. As to quaternary structure, homodimer. Forms an asymmetric heterotetramer with CtrA (2:2). There are at least two modes of interaction between ChpT and CtrA, only one of which is competent to catalyze His-Asp phosphoryl transfer. In terms of processing, is phosphorylated by CckA-P on His-22.

The protein localises to the cytoplasm. Functionally, component of a regulatory phosphorelay system that controls B.abortus cell growth, division, and intracellular survival inside mammalian host cells. This signaling pathway is composed of CckA, ChpT, CtrA and CpdR. ChpT efficiently and specifically shuttles phosphoryl groups from the CckA kinase to the receiver domains of both CtrA and CpdR. Does not bind ATP. Overexpression of chpT results in a defect in cell morphology, DNA content, and intracellular survival in human macrophages. The polypeptide is Protein phosphotransferase ChpT (Brucella abortus (strain 2308)).